A 576-amino-acid chain; its full sequence is Protein NRT1/ PTR FAMILY 2.12 (576 aa).

11 helical membrane passes run phenylalanine 58–isoleucine 78, isoleucine 89–leucine 109, lysine 130–isoleucine 150, phenylalanine 176–valine 196, tryptophan 203–valine 223, valine 329–phenylalanine 349, isoleucine 364–tyrosine 384, methionine 406–valine 426, tryptophan 441–isoleucine 461, isoleucine 475–valine 495, and tyrosine 522–alanine 542.

The protein belongs to the major facilitator superfamily. Proton-dependent oligopeptide transporter (POT/PTR) (TC 2.A.17) family. Expressed in flowers and siliques. Expressed in vascular bundle of the siliques and in funiculus.

The protein localises to the cell membrane. Low-affinity proton-dependent nitrate transporter. Not involved in dipeptides transport. Involved in delivering nitrate for seed development. The chain is Protein NRT1/ PTR FAMILY 2.12 (NPF2.12) from Arabidopsis thaliana (Mouse-ear cress).